We begin with the raw amino-acid sequence, 311 residues long: MAFVKAIKNKAYFKRFQVKYRRRREGKTDYAARRRLILQDKNKYNAPKYRFVVRVTNSRVLCQVMYATLQGDRLVCSADSQELTRYGIKVGLTNYSAAYATGLLLARRLLKQKGLADEFKGLEKPSGEEYHIEEVSEERRPFKCVLDVGIVATTVGNRVFGAMKGACDGGLHIPHSNKRFPGFTKGEDGADDSYNPEVHRARIYGLHVAEYMRTLKEEDPERYQAQFSAYIRNKIDPDSIEKMYEEAFQKIRANPDPVKKEAREVKRVRQGAMIKTAKSQYVRNVKLDKETRKERVLKKIQMVADKMAEEE.

This sequence belongs to the universal ribosomal protein uL18 family. As to quaternary structure, component of the large ribosomal subunit (LSU).

It localises to the cytoplasm. Its subcellular location is the nucleus. In terms of biological role, component of the ribosome, a large ribonucleoprotein complex responsible for the synthesis of proteins in the cell. The small ribosomal subunit (SSU) binds messenger RNAs (mRNAs) and translates the encoded message by selecting cognate aminoacyl-transfer RNA (tRNA) molecules. The large subunit (LSU) contains the ribosomal catalytic site termed the peptidyl transferase center (PTC), which catalyzes the formation of peptide bonds, thereby polymerizing the amino acids delivered by tRNAs into a polypeptide chain. The nascent polypeptides leave the ribosome through a tunnel in the LSU and interact with protein factors that function in enzymatic processing, targeting, and the membrane insertion of nascent chains at the exit of the ribosomal tunnel. This Eimeria tenella (Coccidian parasite) protein is Large ribosomal subunit protein uL18 (RPL5).